Reading from the N-terminus, the 368-residue chain is Biotin synthase (368 aa).

The Radical SAM core domain maps to 74-309; that stretch reads CCGNVVDLCS…QQILRYAGGR (236 aa). 3 residues coordinate [4Fe-4S] cluster: cysteine 92, cysteine 96, and cysteine 99. [2Fe-2S] cluster is bound by residues cysteine 137, cysteine 174, cysteine 234, and arginine 304.

Belongs to the radical SAM superfamily. Biotin synthase family. In terms of assembly, homodimer. [4Fe-4S] cluster is required as a cofactor. It depends on [2Fe-2S] cluster as a cofactor.

It carries out the reaction (4R,5S)-dethiobiotin + (sulfur carrier)-SH + 2 reduced [2Fe-2S]-[ferredoxin] + 2 S-adenosyl-L-methionine = (sulfur carrier)-H + biotin + 2 5'-deoxyadenosine + 2 L-methionine + 2 oxidized [2Fe-2S]-[ferredoxin]. It functions in the pathway cofactor biosynthesis; biotin biosynthesis; biotin from 7,8-diaminononanoate: step 2/2. Functionally, catalyzes the conversion of dethiobiotin (DTB) to biotin by the insertion of a sulfur atom into dethiobiotin via a radical-based mechanism. The chain is Biotin synthase from Rippkaea orientalis (strain PCC 8801 / RF-1) (Cyanothece sp. (strain PCC 8801)).